A 107-amino-acid polypeptide reads, in one-letter code: UPF0145 protein BT_3410 (107 aa).

Belongs to the UPF0145 family.

This is UPF0145 protein BT_3410 from Bacteroides thetaiotaomicron (strain ATCC 29148 / DSM 2079 / JCM 5827 / CCUG 10774 / NCTC 10582 / VPI-5482 / E50).